Consider the following 418-residue polypeptide: UDP-N-acetylglucosamine 1-carboxyvinyltransferase (418 aa).

22 to 23 (KN) serves as a coordination point for phosphoenolpyruvate. Arg91 is a UDP-N-acetyl-alpha-D-glucosamine binding site. Cys115 serves as the catalytic Proton donor. Cys115 bears the 2-(S-cysteinyl)pyruvic acid O-phosphothioketal mark. UDP-N-acetyl-alpha-D-glucosamine contacts are provided by residues 120-124 (RPVDL), Asp305, and Ile327.

The protein belongs to the EPSP synthase family. MurA subfamily.

Its subcellular location is the cytoplasm. The enzyme catalyses phosphoenolpyruvate + UDP-N-acetyl-alpha-D-glucosamine = UDP-N-acetyl-3-O-(1-carboxyvinyl)-alpha-D-glucosamine + phosphate. It functions in the pathway cell wall biogenesis; peptidoglycan biosynthesis. Its function is as follows. Cell wall formation. Adds enolpyruvyl to UDP-N-acetylglucosamine. This is UDP-N-acetylglucosamine 1-carboxyvinyltransferase from Wigglesworthia glossinidia brevipalpis.